Here is a 233-residue protein sequence, read N- to C-terminus: Chaperone protein MrkB (233 aa).

The N-terminal stretch at 1–18 is a signal peptide; the sequence is MKRIALFFCFIFSFAAHA.

It belongs to the periplasmic pilus chaperone family.

The protein localises to the periplasm. Mediates assembly of pili by forming soluble multimeric complexes with pili subunits as an intermediate step in the assembly process. This protein is involved in type 3 pili assembly. The sequence is that of Chaperone protein MrkB (mrkB) from Klebsiella pneumoniae.